A 287-amino-acid polypeptide reads, in one-letter code: Phosphatidylglycerol--prolipoprotein diacylglyceryl transferase (287 aa).

The next 4 membrane-spanning stretches (helical) occupy residues 15 to 35, 55 to 75, 90 to 110, and 117 to 137; these read IGPLSIYWYGIIIAFGAILAI, FVMFAVPIAIIFARIYYVFFE, IWEGGIAIHGAVIGGVITAIV, and VSFWQIADIVAPSLILGQAIG. R138 is a binding site for a 1,2-diacyl-sn-glycero-3-phospho-(1'-sn-glycerol). 2 helical membrane passes run 180–200 and 238–258; these read HPTFLYESVWNILIFVGLLLL and IIRTAQFISILIIIVSIIFII.

Belongs to the Lgt family.

Its subcellular location is the cell membrane. It catalyses the reaction L-cysteinyl-[prolipoprotein] + a 1,2-diacyl-sn-glycero-3-phospho-(1'-sn-glycerol) = an S-1,2-diacyl-sn-glyceryl-L-cysteinyl-[prolipoprotein] + sn-glycerol 1-phosphate + H(+). It functions in the pathway protein modification; lipoprotein biosynthesis (diacylglyceryl transfer). In terms of biological role, catalyzes the transfer of the diacylglyceryl group from phosphatidylglycerol to the sulfhydryl group of the N-terminal cysteine of a prolipoprotein, the first step in the formation of mature lipoproteins. The sequence is that of Phosphatidylglycerol--prolipoprotein diacylglyceryl transferase from Oceanobacillus iheyensis (strain DSM 14371 / CIP 107618 / JCM 11309 / KCTC 3954 / HTE831).